The sequence spans 463 residues: Retinoic acid receptor RXR-gamma (463 aa).

The tract at residues 1–138 is modulating; sequence MYGNYSHFMK…TSPGSLVKHI (138 aa). The interval 16–53 is disordered; it reads GGSPGHTGSTSMSPSVALPTGKPMDSHPSYTDTPVSAP. 2 consecutive NR C4-type zinc fingers follow at residues 139-159 and 175-199; these read CAICGDRSSGKHYGVYSCEGC and CRDNKDCLIDKRQRNRCQYCRYQKC. The segment at residues 139-204 is a DNA-binding region (nuclear receptor); the sequence is CAICGDRSSG…RYQKCLVMGM (66 aa). Residues 205 to 230 are hinge; sequence KREAVQEERQRSRERAESEAECASTG. One can recognise an NR LBD domain in the interval 231 to 459; it reads HEDMPVERIL…TFLMEMLETP (229 aa).

It belongs to the nuclear hormone receptor family. NR2 subfamily. As to quaternary structure, homodimer. Heterodimer with a RAR molecule. Binds DNA preferentially as a RAR/RXR heterodimer. Interacts with RARA. In terms of processing, acetylated by EP300. Expressed in the liver, but not detected in the adrenal gland (at protein level). Restricted expression in adrenal gland, kidney, liver, brain and lungs. Strong expression in heart and muscles.

Its subcellular location is the nucleus. It is found in the cytoplasm. Receptor for retinoic acid. Retinoic acid receptors bind as heterodimers to their target response elements in response to their ligands, all-trans or 9-cis retinoic acid, and regulate gene expression in various biological processes. The RAR/RXR heterodimers bind to the retinoic acid response elements (RARE) composed of tandem 5'-AGGTCA-3' sites known as DR1-DR5. The high affinity ligand for RXRs is 9-cis retinoic acid. The chain is Retinoic acid receptor RXR-gamma (Rxrg) from Rattus norvegicus (Rat).